The sequence spans 382 residues: Ribosomal RNA large subunit methyltransferase G (382 aa).

Belongs to the methyltransferase superfamily. RlmG family.

Its subcellular location is the cytoplasm. It carries out the reaction guanosine(1835) in 23S rRNA + S-adenosyl-L-methionine = N(2)-methylguanosine(1835) in 23S rRNA + S-adenosyl-L-homocysteine + H(+). Specifically methylates the guanine in position 1835 (m2G1835) of 23S rRNA. The chain is Ribosomal RNA large subunit methyltransferase G from Aliivibrio salmonicida (strain LFI1238) (Vibrio salmonicida (strain LFI1238)).